Reading from the N-terminus, the 2212-residue chain is RNA-directed RNA polymerase L (2212 aa).

Residues 30–288 (KDALLSQVHP…SHEENDSLDC (259 aa)) are endonuclease. Glu55, Asp93, and Glu106 together coordinate Mn(2+). Lys119 is a catalytic residue. Residues 922-942 (MKSSDAREERLQDPKRNEKNA) form a disordered region. Over residues 923 to 942 (KSSDAREERLQDPKRNEKNA) the composition is skewed to basic and acidic residues. The RdRp catalytic domain occupies 1175-1371 (CDMKMAVNNG…YLSSKLNKFV (197 aa)). Residue Asp1333 participates in Mg(2+) binding.

This sequence belongs to the Bunyavirales RNA polymerase family. As to quaternary structure, homomultimer; the oligomeric structure is essential for the polymerase activity. Interacts with nucleoprotein N. Interacts with protein Z; this interaction inhibits viral transcription and replication, Z partially blocks the product exit tunnel for the releasing nascent RNA product. Requires Mn(2+) as cofactor. Mg(2+) is required as a cofactor.

The protein localises to the virion. Its subcellular location is the host cytoplasm. The enzyme catalyses RNA(n) + a ribonucleoside 5'-triphosphate = RNA(n+1) + diphosphate. Functionally, RNA-dependent RNA polymerase, which is responsible for the replication and transcription of the viral RNA genome using antigenomic RNA as an intermediate. During transcription, synthesizes subgenomic RNAs and assures their capping by a cap-snatching mechanism, which involves the endonuclease activity cleaving the host capped pre-mRNAs. These short capped RNAs are then used as primers for viral transcription. The 3'-end of subgenomic mRNAs molecules are heterogeneous and not polyadenylated. The replicase function is to direct synthesis of antigenomic and genomic RNA which are encapsidated and non capped. As a consequence of the use of the same enzyme for both transcription and replication, these mechanisms need to be well coordinated. These processes may be regulated by proteins N and Z in a dose-dependent manner. Z protein inhibits the viral polymerase L und thus the viral transcription and RNA synthesis. The sequence is that of RNA-directed RNA polymerase L from Sabia mammarenavirus (isolate Human/Brasil/SPH114202/1990) (SABV).